The following is a 331-amino-acid chain: MKNIKTSPYIPTDISIQEIGKNKIKISAYPFESGYAITLAHPLRRLLLGSSVGFAPTALKIEGAAHEFDSVRGIMEDVALFIVNLKSIRFKMRGDAERVTLDYSFKGPATIKGSDLVNDYVDVVTPNQHLATINEDATLTFSLIVQKGIGYVPSEETRNLIPEGYIPLDAYFTPVKKATYEIENVLVEDNPTYEKIVLEIETDGLIEPIAAFKDALGVMQKQMSVFNSEWSVSSAESTSSDEEDPELKPLLQKIEALNLSARSFNCLDRAGMKFVGELVLLGENELKEVKNLGKKSFDEIKDKLEEIGYPVGSDLAEEVSSALQKRLNKLK.

An alpha N-terminal domain (alpha-NTD) region spans residues 1–230; it reads MKNIKTSPYI…KQMSVFNSEW (230 aa). The alpha C-terminal domain (alpha-CTD) stretch occupies residues 247-331; it reads LKPLLQKIEA…ALQKRLNKLK (85 aa).

This sequence belongs to the RNA polymerase alpha chain family. In terms of assembly, homodimer. The RNAP catalytic core consists of 2 alpha, 1 beta/beta' and 1 omega subunit. When a sigma factor is associated with the core the holoenzyme is formed, which can initiate transcription.

The catalysed reaction is RNA(n) + a ribonucleoside 5'-triphosphate = RNA(n+1) + diphosphate. In terms of biological role, DNA-dependent RNA polymerase catalyzes the transcription of DNA into RNA using the four ribonucleoside triphosphates as substrates. The protein is DNA-directed RNA polymerase subunit alpha of Wolinella succinogenes (strain ATCC 29543 / DSM 1740 / CCUG 13145 / JCM 31913 / LMG 7466 / NCTC 11488 / FDC 602W) (Vibrio succinogenes).